The chain runs to 938 residues: Breast cancer type 2 susceptibility protein homolog (938 aa).

2 stretches are compositionally biased toward basic and acidic residues: residues 320-339 (LEPSFQKEQKSSKDSNESKI) and 409-425 (NSIKRTDEEQPEKETPN). Disordered regions lie at residues 320 to 359 (LEPSFQKEQKSSKDSNESKIRAPSKPSCDITEKNEGTTVL) and 409 to 434 (NSIKRTDEEQPEKETPNKSRSTSSHQ). BRCA2 repeat units follow at residues 537 to 571 (AEPEFCGFRTASNKAIPISEKMKIKTAEFMAEFQY), 638 to 672 (NEPQFFGFRTASKKAIEITEAMEKRGAMFLAQSRA), and 713 to 747 (SETEFFGFRTASNKGIVISENTKMKVAQFMSEFQA). The segment covering 870-879 (SSTETSTSCA) has biased composition (polar residues). The interval 870 to 938 (SSTETSTSCA…RRLGLSRSRY (69 aa)) is disordered. A compositionally biased stretch (basic and acidic residues) spans 898-915 (ADRDLNRSKDCAKNRQDA). The segment covering 926–938 (KKSRRLGLSRSRY) has biased composition (basic residues).

In terms of assembly, interacts with Rad9 and spn-A/Rad51.

It is found in the nucleus. In terms of biological role, involved in and required for double-strand break repair by meiotic and mitotic homologous recombination. During meiosis, has a dual role in the repair of meiotic double-stranded breaks and the efficient activation of the meiotic recombination checkpoint. The protein is Breast cancer type 2 susceptibility protein homolog of Drosophila sechellia (Fruit fly).